The sequence spans 103 residues: MAKKSLIQREKKRHKLEQKYHLIRRSLKKKIRSKVSPLSLSEKTKMQEKLQSLPRNSAPTRLHRRCFLTGRPRANYRDFGLSGHILREMVYACLLPGATRSSW.

A disordered region spans residues 34-56 (KVSPLSLSEKTKMQEKLQSLPRN).

This sequence belongs to the universal ribosomal protein uS14 family. Part of the 30S ribosomal subunit.

Its subcellular location is the plastid. The protein localises to the chloroplast. In terms of biological role, binds 16S rRNA, required for the assembly of 30S particles. This Saccharum hybrid (Sugarcane) protein is Small ribosomal subunit protein uS14c.